The sequence spans 574 residues: Sulfate adenylyltransferase (574 aa).

The interval 1–169 is N-terminal; sequence MSNPPHGGVL…VEAINKLNHY (169 aa). Positions 170 to 394 are catalytic; that stretch reads DYVALRYTPA…LRESSRPRST (225 aa). Sulfate is bound at residue Gln197. ATP contacts are provided by residues 197–200 and 291–294; these read QTRN and GRDH. Catalysis depends on residues Thr198, Arg199, and Asn200. Arg199 serves as a coordination point for sulfate. Position 295 (Ala295) interacts with sulfate. Val333 serves as a coordination point for ATP. The interval 395-574 is allosteric regulation domain; adenylyl-sulfate kinase-like; the sequence is QGFTIFLTGY…LETEGFFDRA (180 aa). 3'-phosphoadenylyl sulfate-binding positions include 434-437, Arg451, 477-478, and Arg516; these read DTVR and IA.

It in the N-terminal section; belongs to the sulfate adenylyltransferase family. The protein in the C-terminal section; belongs to the APS kinase family. Homohexamer. Dimer of trimers.

It localises to the cytoplasm. It catalyses the reaction sulfate + ATP + H(+) = adenosine 5'-phosphosulfate + diphosphate. The protein operates within sulfur metabolism; hydrogen sulfide biosynthesis; sulfite from sulfate: step 1/3. With respect to regulation, allosterically inhibited by 3'-phosphoadenosine 5'-phosphosulfate (PAPS). Catalyzes the first intracellular reaction of sulfate assimilation, forming adenosine-5'-phosphosulfate (APS) from inorganic sulfate and ATP. Plays an important role in sulfate activation as a component of the biosynthesis pathway of sulfur-containing amino acids. This is Sulfate adenylyltransferase from Aspergillus clavatus (strain ATCC 1007 / CBS 513.65 / DSM 816 / NCTC 3887 / NRRL 1 / QM 1276 / 107).